We begin with the raw amino-acid sequence, 71 residues long: Defensin-like protein 292 (71 aa).

Cystine bridges form between Cys44/Cys64, Cys50/Cys69, and Cys56/Cys71.

This sequence belongs to the DEFL family.

This is Defensin-like protein 292 from Arabidopsis thaliana (Mouse-ear cress).